Consider the following 193-residue polypeptide: Riboflavin kinase (193 aa).

Residues M1–H59 are H-T-H motif-like. The tract at residues V60–D193 is riboflavin kinase. G69–A74 is a binding site for CDP. Mg(2+)-binding residues include T98 and N100. Residues T156 and E164 each contribute to the FMN site. Position 169 to 172 (L169 to R172) interacts with CDP.

It belongs to the archaeal riboflavin kinase family. Mg(2+) is required as a cofactor.

The catalysed reaction is riboflavin + CTP = CDP + FMN + H(+). It functions in the pathway cofactor biosynthesis; FMN biosynthesis; FMN from riboflavin (CTP route): step 1/1. In terms of biological role, catalyzes the CTP-dependent phosphorylation of riboflavin (vitamin B2) to form flavin mononucleotide (FMN). The polypeptide is Riboflavin kinase (ribK) (Cenarchaeum symbiosum (strain A)).